Consider the following 123-residue polypeptide: Large ribosomal subunit protein bL21 (123 aa).

Belongs to the bacterial ribosomal protein bL21 family. In terms of assembly, part of the 50S ribosomal subunit. Contacts protein L20.

In terms of biological role, this protein binds to 23S rRNA in the presence of protein L20. The polypeptide is Large ribosomal subunit protein bL21 (Sinorhizobium fredii (strain NBRC 101917 / NGR234)).